We begin with the raw amino-acid sequence, 556 residues long: Valencene synthase (556 aa).

Polar residues predominate over residues 1 to 12 (MSTQVSASSLAQ). Residues 1–24 (MSTQVSASSLAQIPQPKNRPVANF) are disordered. 3 residues coordinate Mg(2+): D310, D314, and E462. A DDXXD motif motif is present at residues 310–314 (DDIHD).

The protein belongs to the terpene synthase family. Tpsa subfamily. Mg(2+) serves as cofactor. In terms of tissue distribution, expressed in flowers and anthers. Detected inside the pollen grains, but not in stems, leaves, tendrils, roots, seeds, pistils or caps.

The protein resides in the cytoplasm. It catalyses the reaction (2E,6E)-farnesyl diphosphate = (+)-valencene + diphosphate. The catalysed reaction is (2E,6E)-farnesyl diphosphate = (-)-7-epi-alpha-selinene + diphosphate. It functions in the pathway secondary metabolite biosynthesis; terpenoid biosynthesis. Functionally, involved in the biosynthesis of valencene, a major volatile emitted from flowers of grapevine. Can use farnesyl diphosphate as substrate, but not geranyl diphosphate or geranylgeranyl diphosphate. Produces mainly (+)-valencene and (-)-7-epi-alpha-selinene along with five minor products. This chain is Valencene synthase (ValCS), found in Vitis vinifera (Grape).